The following is a 588-amino-acid chain: UDP-N-acetylmuramate--L-alanine ligase (588 aa).

119–125 (GSHGKST) provides a ligand contact to ATP. Residues 344 to 371 (VPAAAGAAAAPPVRRDPATAAAAATTAP) show a composition bias toward low complexity. Positions 344–411 (VPAAAGAAAA…APAAGPDHAA (68 aa)) are disordered. The span at 372–381 (IGPPDSPPPT) shows a compositional bias: pro residues. The span at 382–411 (GIALPRAAPPAVDAPVAATPAPAAGPDHAA) shows a compositional bias: low complexity.

It belongs to the MurCDEF family.

Its subcellular location is the cytoplasm. It carries out the reaction UDP-N-acetyl-alpha-D-muramate + L-alanine + ATP = UDP-N-acetyl-alpha-D-muramoyl-L-alanine + ADP + phosphate + H(+). It functions in the pathway cell wall biogenesis; peptidoglycan biosynthesis. Cell wall formation. This chain is UDP-N-acetylmuramate--L-alanine ligase, found in Frankia alni (strain DSM 45986 / CECT 9034 / ACN14a).